Here is a 194-residue protein sequence, read N- to C-terminus: Cupin-domain-containing oxidoreductase virC (194 aa).

Positions 106 to 175 (IDFAPNVISP…GTLPGRMMWV (70 aa)) constitute a Cupin type-2 domain.

This sequence belongs to the virC family.

It participates in secondary metabolite biosynthesis. Its function is as follows. Cupin-domain-containing oxidoreductase; part of the gene cluster that mediates the biosynthesis of virensols and trichoxide, fungal natural products that contain or are derived from a salicylaldehyde core. The pathway begins with the synthesis of the reduced chain in virensol C by the highly reducing polyketide synthase virA via condensation of one acetate and 8 malonate units. VirA has interesting programming rules since the first 2 ketides are fully reduced, the 3 following ketides undergo beta-dehydration, and the last 3 ketides are only reduced to beta-hydroxys to yield the trihydroxy portion. The production of aldehyde virensol C by virA alone is surprising, since virA does not contain a reductase (R) domain that is typically associated with reductive product release in HRPKS. The cupin-domain enzyme virC is involved in enhancing virA product turnover. The short-chain dehydrogenase virB then oxidizes the C-7 alcohol of virensol C to a ketone, yielding virensol D. Virensol D is further transformed to salicylaldehyde 5-deoxyaurocitrin by the short-chain dehydrogenase virD. VirD catalyzes the dehydrogenation of C-3 to form the beta-ketone aldehyde, which is followed by the generation of the nucleophilic C-2 that is required for the intramolecular aldol condensation between C-2 and C-7, itself followed by dehydration and aromatization which leads to salicylaldehyde 5-deoxyaurocitrin. While the dehydrogenation of virensol D is definitely catalyzed by virD, the aldol condensation and dehydration may be uncatalyzed or assisted by virD. The short chain dehydrogenase virG then converts salicylaldehyde 5-deoxyaurocitrin into virensol B which is further hydroxylated by the cytochrome P450 monooxygenase virE to yield the hydroquinone virensol A. VirI then may oxidize virensol A to form the quinone, while virH performs the epoxidation. Finally, the two remaining short-chain dehydrogenases, virK and virL, are probably responsible for reducing the ketones to the corresponding alcohols to furnish the epoxycyclohexanol structure in trichoxide. The chain is Cupin-domain-containing oxidoreductase virC from Hypocrea virens (strain Gv29-8 / FGSC 10586) (Gliocladium virens).